An 87-amino-acid chain; its full sequence is MAFKKKFTPRRKFCRFCADKDLPLDYKRADILRDFITERGKIIARRITGTCAHHQRLLTREIKRARQMALLFYTAGHSSDVKKKSQI.

The protein belongs to the bacterial ribosomal protein bS18 family. Part of the 30S ribosomal subunit. Forms a tight heterodimer with protein bS6.

In terms of biological role, binds as a heterodimer with protein bS6 to the central domain of the 16S rRNA, where it helps stabilize the platform of the 30S subunit. This chain is Small ribosomal subunit protein bS18, found in Nitratidesulfovibrio vulgaris (strain DSM 19637 / Miyazaki F) (Desulfovibrio vulgaris).